The following is a 383-amino-acid chain: Alanine racemase (383 aa).

Lysine 50 functions as the Proton acceptor; specific for D-alanine in the catalytic mechanism. Lysine 50 carries the N6-(pyridoxal phosphate)lysine modification. Arginine 151 is a binding site for substrate. Catalysis depends on tyrosine 279, which acts as the Proton acceptor; specific for L-alanine. Methionine 327 contacts substrate.

It belongs to the alanine racemase family. Pyridoxal 5'-phosphate serves as cofactor.

The enzyme catalyses L-alanine = D-alanine. It participates in amino-acid biosynthesis; D-alanine biosynthesis; D-alanine from L-alanine: step 1/1. Its function is as follows. Catalyzes the interconversion of L-alanine and D-alanine. May also act on other amino acids. The polypeptide is Alanine racemase (alr) (Chlorobaculum tepidum (strain ATCC 49652 / DSM 12025 / NBRC 103806 / TLS) (Chlorobium tepidum)).